The sequence spans 129 residues: Phosphoribosyl-AMP cyclohydrolase (129 aa).

Asp78 lines the Mg(2+) pocket. Cys79 is a Zn(2+) binding site. The Mg(2+) site is built by Asp80 and Asp82. Residues Cys96 and Cys103 each contribute to the Zn(2+) site.

It belongs to the PRA-CH family. Homodimer. The cofactor is Mg(2+). Requires Zn(2+) as cofactor.

The protein localises to the cytoplasm. The catalysed reaction is 1-(5-phospho-beta-D-ribosyl)-5'-AMP + H2O = 1-(5-phospho-beta-D-ribosyl)-5-[(5-phospho-beta-D-ribosylamino)methylideneamino]imidazole-4-carboxamide. The protein operates within amino-acid biosynthesis; L-histidine biosynthesis; L-histidine from 5-phospho-alpha-D-ribose 1-diphosphate: step 3/9. Its function is as follows. Catalyzes the hydrolysis of the adenine ring of phosphoribosyl-AMP. In Nitrosomonas eutropha (strain DSM 101675 / C91 / Nm57), this protein is Phosphoribosyl-AMP cyclohydrolase.